The following is a 326-amino-acid chain: Biotin synthase (326 aa).

Positions 51–278 constitute a Radical SAM core domain; the sequence is NEVQRSTLLS…TSYVRLSAGR (228 aa). Residues cysteine 66, cysteine 70, and cysteine 73 each coordinate [4Fe-4S] cluster. [2Fe-2S] cluster-binding residues include cysteine 110, cysteine 141, cysteine 201, and arginine 273.

It belongs to the radical SAM superfamily. Biotin synthase family. In terms of assembly, homodimer. It depends on [4Fe-4S] cluster as a cofactor. [2Fe-2S] cluster serves as cofactor.

It catalyses the reaction (4R,5S)-dethiobiotin + (sulfur carrier)-SH + 2 reduced [2Fe-2S]-[ferredoxin] + 2 S-adenosyl-L-methionine = (sulfur carrier)-H + biotin + 2 5'-deoxyadenosine + 2 L-methionine + 2 oxidized [2Fe-2S]-[ferredoxin]. It functions in the pathway cofactor biosynthesis; biotin biosynthesis; biotin from 7,8-diaminononanoate: step 2/2. Catalyzes the conversion of dethiobiotin (DTB) to biotin by the insertion of a sulfur atom into dethiobiotin via a radical-based mechanism. The polypeptide is Biotin synthase (Azoarcus sp. (strain BH72)).